A 409-amino-acid polypeptide reads, in one-letter code: uncharacterized protein (409 aa).

Positions 3 to 162 (TDVRVLRQDD…DDVRLRYAVP (160 aa)) constitute an N-acetyltransferase domain. Residues 82 to 84 (VSV), 90 to 95 (RRGVLT), and 118 to 119 (SE) contribute to the acetyl-CoA site. The Proton donor role is filled by Tyr-123. Phe-409 acts as the Proton acceptor; via carboxylate in catalysis.

The protein belongs to the acetyltransferase Eis family. Homohexamer; trimer of dimers.

This is an uncharacterized protein from Streptomyces avermitilis (strain ATCC 31267 / DSM 46492 / JCM 5070 / NBRC 14893 / NCIMB 12804 / NRRL 8165 / MA-4680).